A 300-amino-acid polypeptide reads, in one-letter code: tRNA dimethylallyltransferase (300 aa).

11 to 18 (GPTAVGKS) provides a ligand contact to ATP. 13–18 (TAVGKS) provides a ligand contact to substrate. The interval 35–38 (DSIQ) is interaction with substrate tRNA.

Belongs to the IPP transferase family. In terms of assembly, monomer. It depends on Mg(2+) as a cofactor.

The catalysed reaction is adenosine(37) in tRNA + dimethylallyl diphosphate = N(6)-dimethylallyladenosine(37) in tRNA + diphosphate. Functionally, catalyzes the transfer of a dimethylallyl group onto the adenine at position 37 in tRNAs that read codons beginning with uridine, leading to the formation of N6-(dimethylallyl)adenosine (i(6)A). This chain is tRNA dimethylallyltransferase, found in Borrelia turicatae (strain 91E135).